Consider the following 460-residue polypeptide: Antizyme inhibitor 2 (460 aa).

Residues Gln117–Leu140 form a necessary for polyamine uptake stimulation region.

Belongs to the Orn/Lys/Arg decarboxylase class-II family. ODC antizyme inhibitor subfamily. As to quaternary structure, monomer. Interacts with OAZ1, OAZ2 and OAZ3; this interaction disrupts the interaction between the antizyme and ODC1. Does not form a heterodimer with ODC1. Post-translationally, ubiquitinated, leading to its proteasomal degradation; a process that is reduced in presence of antizymes. May also be degraded through the lysosomal degradative pathway in a proteasomal-independent manner. As to expression, expressed in the neocortex, thalamus, hippocampus, cerebellum, medulla oblongata, gray and white matter. Expressed in neurons, oligodendrocytes, basket, Purkinje and pyramidal cells. Expressed in spermatocytes and Leydig cells of the testis. Expressed in luteal theca cells lining corpus luteum cysts and in hilus cells of the ovary. Expressed in primary and neoplastic mast cells (MC) (at protein level). Highly expressed in brain. Also expressed in testis.

The protein resides in the nucleus. It localises to the cytoplasm. It is found in the perinuclear region. The protein localises to the membrane. Its subcellular location is the cytoplasmic vesicle. The protein resides in the endoplasmic reticulum-Golgi intermediate compartment. It localises to the golgi apparatus. It is found in the cis-Golgi network. The protein localises to the trans-Golgi network. Its subcellular location is the cytoplasmic granule. The protein resides in the cell projection. It localises to the axon. It is found in the dendrite. The protein localises to the perikaryon. Antizyme inhibitor (AZI) protein that positively regulates ornithine decarboxylase (ODC) activity and polyamine uptake. AZI is an enzymatically inactive ODC homolog that counteracts the negative effect of ODC antizymes (AZs) OAZ1, OAZ2 and OAZ3 on ODC activity by competing with ODC for antizyme-binding. Inhibits antizyme-dependent ODC degradation and releases ODC monomers from their inactive complex with antizymes, leading to formation of the catalytically active ODC homodimer and restoring polyamine production. Participates in the morphological integrity of the trans-Golgi network (TGN) and functions as a regulator of intracellular secretory vesicle trafficking. The protein is Antizyme inhibitor 2 (AZIN2) of Homo sapiens (Human).